Reading from the N-terminus, the 115-residue chain is Nucleoid-associated protein LBL_0065 (115 aa).

Belongs to the YbaB/EbfC family. Homodimer.

It localises to the cytoplasm. The protein resides in the nucleoid. Binds to DNA and alters its conformation. May be involved in regulation of gene expression, nucleoid organization and DNA protection. This chain is Nucleoid-associated protein LBL_0065, found in Leptospira borgpetersenii serovar Hardjo-bovis (strain L550).